A 211-amino-acid polypeptide reads, in one-letter code: Large ribosomal subunit protein uL4 (211 aa).

A compositionally biased stretch (polar residues) spans 41–53; that stretch reads QAHSRQGTASTLT. The segment at 41-85 is disordered; sequence QAHSRQGTASTLTRAEVRGGGRKPYKQKGTGRARQGSIRTPLRPG. Over residues 60 to 71 the composition is skewed to basic residues; it reads GGRKPYKQKGTG.

It belongs to the universal ribosomal protein uL4 family. Part of the 50S ribosomal subunit.

In terms of biological role, one of the primary rRNA binding proteins, this protein initially binds near the 5'-end of the 23S rRNA. It is important during the early stages of 50S assembly. It makes multiple contacts with different domains of the 23S rRNA in the assembled 50S subunit and ribosome. Its function is as follows. Forms part of the polypeptide exit tunnel. The sequence is that of Large ribosomal subunit protein uL4 from Prochlorococcus marinus (strain SARG / CCMP1375 / SS120).